Here is a 1342-residue protein sequence, read N- to C-terminus: DNA-directed RNA polymerase subunit beta (1342 aa).

The protein belongs to the RNA polymerase beta chain family. The RNAP catalytic core consists of 2 alpha, 1 beta, 1 beta' and 1 omega subunit. When a sigma factor is associated with the core the holoenzyme is formed, which can initiate transcription.

It catalyses the reaction RNA(n) + a ribonucleoside 5'-triphosphate = RNA(n+1) + diphosphate. Its function is as follows. DNA-dependent RNA polymerase catalyzes the transcription of DNA into RNA using the four ribonucleoside triphosphates as substrates. In Sodalis glossinidius (strain morsitans), this protein is DNA-directed RNA polymerase subunit beta.